Reading from the N-terminus, the 247-residue chain is Segregation and condensation protein A (247 aa).

Belongs to the ScpA family. Component of a cohesin-like complex composed of ScpA, ScpB and the Smc homodimer, in which ScpA and ScpB bind to the head domain of Smc. The presence of the three proteins is required for the association of the complex with DNA.

Its subcellular location is the cytoplasm. Functionally, participates in chromosomal partition during cell division. May act via the formation of a condensin-like complex containing Smc and ScpB that pull DNA away from mid-cell into both cell halves. This chain is Segregation and condensation protein A, found in Mycoplasma mobile (strain ATCC 43663 / 163K / NCTC 11711) (Mesomycoplasma mobile).